The primary structure comprises 446 residues: Argininosuccinate synthase (446 aa).

ATP contacts are provided by residues 17–25 and Ala-43; that span reads AFSGGLDTS. Position 99 (Tyr-99) interacts with L-citrulline. ATP-binding residues include Gly-129 and Thr-131. 3 residues coordinate L-aspartate: Thr-131, Asn-135, and Asp-136. Asn-135 lines the L-citrulline pocket. Asp-136 contributes to the ATP binding site. L-citrulline is bound by residues Arg-139 and Ser-192. Asp-194 serves as a coordination point for ATP. Positions 201, 203, and 280 each coordinate L-citrulline.

It belongs to the argininosuccinate synthase family. Type 2 subfamily. In terms of assembly, homotetramer.

Its subcellular location is the cytoplasm. The catalysed reaction is L-citrulline + L-aspartate + ATP = 2-(N(omega)-L-arginino)succinate + AMP + diphosphate + H(+). The protein operates within amino-acid biosynthesis; L-arginine biosynthesis; L-arginine from L-ornithine and carbamoyl phosphate: step 2/3. This is Argininosuccinate synthase from Burkholderia mallei (strain NCTC 10247).